The chain runs to 437 residues: tRNA pseudouridine synthase Pus10 (437 aa).

The region spanning 76 to 198 (VARDVVEHLS…GGGVDIQVNS (123 aa)) is the THUMP domain. Residue Asp-253 is the Nucleophile of the active site. Substrate contacts are provided by Tyr-321 and Tyr-394.

This sequence belongs to the pseudouridine synthase Pus10 family.

The catalysed reaction is uridine(54) in tRNA = pseudouridine(54) in tRNA. It catalyses the reaction uridine(55) in tRNA = pseudouridine(55) in tRNA. In terms of biological role, responsible for synthesis of pseudouridine from uracil-54 and uracil-55 in the psi GC loop of transfer RNAs. This is tRNA pseudouridine synthase Pus10 from Aeropyrum pernix (strain ATCC 700893 / DSM 11879 / JCM 9820 / NBRC 100138 / K1).